The primary structure comprises 293 residues: Ribosomal RNA small subunit methyltransferase H (293 aa).

Residues Gly32–His34, Asp51, Phe78, Asp99, and Gln106 each bind S-adenosyl-L-methionine. Positions Ser272 to Ile293 are disordered.

The protein belongs to the methyltransferase superfamily. RsmH family.

It is found in the cytoplasm. The enzyme catalyses cytidine(1402) in 16S rRNA + S-adenosyl-L-methionine = N(4)-methylcytidine(1402) in 16S rRNA + S-adenosyl-L-homocysteine + H(+). In terms of biological role, specifically methylates the N4 position of cytidine in position 1402 (C1402) of 16S rRNA. This chain is Ribosomal RNA small subunit methyltransferase H, found in Sulfurihydrogenibium sp. (strain YO3AOP1).